We begin with the raw amino-acid sequence, 485 residues long: Probable phosphomannomutase (485 aa).

The active-site Phosphoserine intermediate is Ser86. Ser86, Asp236, Asp238, and Asp240 together coordinate Mg(2+).

It belongs to the phosphohexose mutase family. Mg(2+) is required as a cofactor.

The enzyme catalyses alpha-D-mannose 1-phosphate = D-mannose 6-phosphate. The protein is Probable phosphomannomutase of Haemophilus influenzae (strain ATCC 51907 / DSM 11121 / KW20 / Rd).